A 63-amino-acid polypeptide reads, in one-letter code: Large ribosomal subunit protein uL30 (63 aa).

This sequence belongs to the universal ribosomal protein uL30 family. As to quaternary structure, part of the 50S ribosomal subunit.

This chain is Large ribosomal subunit protein uL30, found in Rickettsia canadensis (strain McKiel).